A 616-amino-acid polypeptide reads, in one-letter code: Dihydroxy-acid dehydratase (616 aa).

A Mg(2+)-binding site is contributed by Asp-81. Cys-122 is a [2Fe-2S] cluster binding site. Residues Asp-123 and Lys-124 each contribute to the Mg(2+) site. Lys-124 carries the N6-carboxylysine modification. Position 195 (Cys-195) interacts with [2Fe-2S] cluster. A Mg(2+)-binding site is contributed by Glu-491. The active-site Proton acceptor is Ser-517.

This sequence belongs to the IlvD/Edd family. As to quaternary structure, homodimer. [2Fe-2S] cluster is required as a cofactor. Requires Mg(2+) as cofactor.

It carries out the reaction (2R)-2,3-dihydroxy-3-methylbutanoate = 3-methyl-2-oxobutanoate + H2O. The enzyme catalyses (2R,3R)-2,3-dihydroxy-3-methylpentanoate = (S)-3-methyl-2-oxopentanoate + H2O. Its pathway is amino-acid biosynthesis; L-isoleucine biosynthesis; L-isoleucine from 2-oxobutanoate: step 3/4. It participates in amino-acid biosynthesis; L-valine biosynthesis; L-valine from pyruvate: step 3/4. In terms of biological role, functions in the biosynthesis of branched-chain amino acids. Catalyzes the dehydration of (2R,3R)-2,3-dihydroxy-3-methylpentanoate (2,3-dihydroxy-3-methylvalerate) into 2-oxo-3-methylpentanoate (2-oxo-3-methylvalerate) and of (2R)-2,3-dihydroxy-3-methylbutanoate (2,3-dihydroxyisovalerate) into 2-oxo-3-methylbutanoate (2-oxoisovalerate), the penultimate precursor to L-isoleucine and L-valine, respectively. The sequence is that of Dihydroxy-acid dehydratase from Blochmanniella pennsylvanica (strain BPEN).